A 331-amino-acid chain; its full sequence is Nucleotide sugar transporter SLC35B4 (331 aa).

The next 11 membrane-spanning stretches (helical) occupy residues 4-24, 30-50, 59-79, 92-112, 117-137, 153-173, 201-221, 229-249, 251-267, 268-288, and 291-311; these read ALAVGLVFAGCCSNVIFLELL, GCGNIVTFAQFLFIAVEGFLF, PAIPIRYYAIMVTMFFTVSVV, LHMIFRSGSLIANMILGIIIL, SIFKYTSIALVSVGIFICTFM, GFQAFVWWLLGIGALTFALLM, ALPLPGFVFLASDIYDHAVLF, IPVIGVTLPIMWFYLLMNIIT, YVCIRGVFILTTECASL, TVTLVVTLRKFVSLIFSILYF, and PFTLWHWLGTLFVFIGTLMYT. The short motif at 326–331 is the Mediates endoplasmic reticulum retention element; that stretch reads KDSKKN.

Belongs to the nucleotide-sugar transporter family. SLC35B subfamily.

It is found in the endoplasmic reticulum membrane. The catalysed reaction is UDP-N-acetyl-alpha-D-glucosamine(in) + UDP-alpha-D-glucuronate(out) = UDP-N-acetyl-alpha-D-glucosamine(out) + UDP-alpha-D-glucuronate(in). It catalyses the reaction UDP-alpha-D-xylose(in) + UDP-alpha-D-glucuronate(out) = UDP-alpha-D-xylose(out) + UDP-alpha-D-glucuronate(in). Functionally, antiporter that transports nucleotide sugars across the endoplasmic reticulum (ER) membrane in exchange for another nucleotide sugar. May couple UDP-alpha-D-glucuronate (UDP-GlcA) or UDP-alpha-D-xylose (UDP-Xyl) efflux to UDP-alpha-D-glucuronate (UDP-GlcA) influx into the ER lumen, which in turn stimulates glucuronidation and excretion of endobiotics and xenobiotics. Has UDP-GlcA:UDP-GlcNAc antiporter activity. This is Nucleotide sugar transporter SLC35B4 (SLC35B4) from Homo sapiens (Human).